The following is a 192-amino-acid chain: Ion-translocating oxidoreductase complex subunit B (192 aa).

The tract at residues 1–26 (MSAVWIAVIAISLLGLIFGLILGYAS) is hydrophobic. In terms of domain architecture, 4Fe-4S spans 32-91 (QDDPVVEKIDELLPQSQCGQCGYPGCRPYAEAVGAQGEKINRCAPGGEAVMLKIAALLNV). Cys-49, Cys-52, Cys-57, Cys-74, Cys-117, Cys-120, Cys-123, Cys-127, Cys-147, Cys-150, Cys-153, and Cys-157 together coordinate [4Fe-4S] cluster. 2 consecutive 4Fe-4S ferredoxin-type domains span residues 108 to 137 (MLAVIDEPNCIGCTKCIQACPVDAIVGATR) and 138 to 167 (AMHTVMNDLCTGCNLCVAPCPTQCISLVPV).

The protein belongs to the 4Fe4S bacterial-type ferredoxin family. RnfB subfamily. In terms of assembly, the complex is composed of six subunits: RnfA, RnfB, RnfC, RnfD, RnfE and RnfG. [4Fe-4S] cluster serves as cofactor.

The protein localises to the cell inner membrane. Functionally, part of a membrane-bound complex that couples electron transfer with translocation of ions across the membrane. This is Ion-translocating oxidoreductase complex subunit B from Klebsiella pneumoniae (strain 342).